The primary structure comprises 377 residues: Chaperone protein DnaJ (377 aa).

The J domain occupies 5–70; that stretch reads DYYEILGVSK…QKRAAYDQYG (66 aa). Residues 132-210 form a CR-type zinc finger; sequence GVTKEIRIPT…CHGHGRVEKT (79 aa). C145, C148, C162, C165, C184, C187, C198, and C201 together coordinate Zn(2+). 4 CXXCXGXG motif repeats span residues 145-152, 162-169, 184-191, and 198-205; these read CDVCHGSG, CPTCHGAG, CPHCQGRG, and CNKCHGHG.

It belongs to the DnaJ family. Homodimer. The cofactor is Zn(2+).

It localises to the cytoplasm. Participates actively in the response to hyperosmotic and heat shock by preventing the aggregation of stress-denatured proteins and by disaggregating proteins, also in an autonomous, DnaK-independent fashion. Unfolded proteins bind initially to DnaJ; upon interaction with the DnaJ-bound protein, DnaK hydrolyzes its bound ATP, resulting in the formation of a stable complex. GrpE releases ADP from DnaK; ATP binding to DnaK triggers the release of the substrate protein, thus completing the reaction cycle. Several rounds of ATP-dependent interactions between DnaJ, DnaK and GrpE are required for fully efficient folding. Also involved, together with DnaK and GrpE, in the DNA replication of plasmids through activation of initiation proteins. The polypeptide is Chaperone protein DnaJ (Klebsiella pneumoniae (strain 342)).